A 175-amino-acid polypeptide reads, in one-letter code: MVRKIITYPNPRLFLNSEIVNKFDTELHTLLDDMYETMIASNGVGLAAIQVDIPLRVLLVNIFDENDEQKKEDLLEIINPEIIPLDEEMITCTEGCLSVPDFFEEVKRYNHILLKYQDRFGEFKELEAKGFLAVAIQHENDHLNGHLFIEKISFAKRQKFDKEFKKKKKNHKKEK.

Residues Cys96 and His138 each contribute to the Fe cation site. Glu139 is an active-site residue. His142 is a Fe cation binding site.

It belongs to the polypeptide deformylase family. Requires Fe(2+) as cofactor.

The enzyme catalyses N-terminal N-formyl-L-methionyl-[peptide] + H2O = N-terminal L-methionyl-[peptide] + formate. Removes the formyl group from the N-terminal Met of newly synthesized proteins. Requires at least a dipeptide for an efficient rate of reaction. N-terminal L-methionine is a prerequisite for activity but the enzyme has broad specificity at other positions. In Campylobacter jejuni subsp. jejuni serotype O:2 (strain ATCC 700819 / NCTC 11168), this protein is Peptide deformylase.